Reading from the N-terminus, the 83-residue chain is Weak neurotoxin WNTX33 (83 aa).

Positions 1-21 (MKTLLLTLVVVTIVCLDLGYS) are cleaved as a signal peptide. 4 disulfides stabilise this stretch: Cys24-Cys45, Cys38-Cys62, Cys64-Cys75, and Cys76-Cys81.

This sequence belongs to the three-finger toxin family. Short-chain subfamily. In terms of tissue distribution, expressed by the venom gland.

It localises to the secreted. The protein is Weak neurotoxin WNTX33 of Ophiophagus hannah (King cobra).